A 122-amino-acid polypeptide reads, in one-letter code: MIQQESRMRVADNTGAKELLCIRVLGGTKRRYASVGDTIIATVKQANPGGSAKKGEVVRAVIVRVKKGYTRPDGSMIQFDDNAAVIINQQGNPRGTRIFGPVARELREKQYMKIISLAPEVL.

Belongs to the universal ribosomal protein uL14 family. Part of the 50S ribosomal subunit. Forms a cluster with proteins L3 and L19. In the 70S ribosome, L14 and L19 interact and together make contacts with the 16S rRNA in bridges B5 and B8.

Its function is as follows. Binds to 23S rRNA. Forms part of two intersubunit bridges in the 70S ribosome. The protein is Large ribosomal subunit protein uL14 of Herpetosiphon aurantiacus (strain ATCC 23779 / DSM 785 / 114-95).